The following is a 100-amino-acid chain: Omega-hexatoxin-Asp2a (100 aa).

The N-terminal stretch at 1 to 23 (MKFSKLSITLAVILTQAVFVLCG) is a signal peptide. Positions 24-55 (MKNEDFMEKGLESNELHDAIKKPVNSGKPDTE) are excised as a propeptide. 3 disulfide bridges follow: cysteine 60–cysteine 73, cysteine 66–cysteine 79, and cysteine 72–cysteine 84.

It belongs to the neurotoxin 15 family. 02 (omega-actx) subfamily. In terms of tissue distribution, expressed by the venom gland.

It localises to the secreted. In terms of biological role, potent inhibitor of insect, but not mammalian, voltage-gated calcium channels (Cav). The polypeptide is Omega-hexatoxin-Asp2a (Atrax sp. (strain Illawarra) (Funnel-web spider)).